Reading from the N-terminus, the 256-residue chain is uncharacterized protein (256 aa).

This is an uncharacterized protein from Bacillus subtilis (strain 168).